A 529-amino-acid chain; its full sequence is Peptide chain release factor 3 (529 aa).

A tr-type G domain is found at 11-280 (AKRRTFAIIS…GLVEWAPAPM (270 aa)). GTP-binding positions include 20-27 (SHPDAGKT), 88-92 (DTPGH), and 142-145 (NKLD).

The protein belongs to the TRAFAC class translation factor GTPase superfamily. Classic translation factor GTPase family. PrfC subfamily.

It localises to the cytoplasm. Increases the formation of ribosomal termination complexes and stimulates activities of RF-1 and RF-2. It binds guanine nucleotides and has strong preference for UGA stop codons. It may interact directly with the ribosome. The stimulation of RF-1 and RF-2 is significantly reduced by GTP and GDP, but not by GMP. The protein is Peptide chain release factor 3 of Citrobacter koseri (strain ATCC BAA-895 / CDC 4225-83 / SGSC4696).